We begin with the raw amino-acid sequence, 262 residues long: WW domain-binding protein 2 (262 aa).

Residues 1-84 (MALNKNHSEG…YLMKDCEVKQ (84 aa)) form the GRAM domain. Tyr192 carries the phosphotyrosine modification. The short motif at 196–200 (PPPPY) is the PPxY motif 1 element. Residues 197–206 (PPPYPGPMEP) are compositionally biased toward pro residues. The disordered stretch occupies residues 197-262 (PPPYPGPMEP…YYPPEDKKTQ (66 aa)). The span at 219–231 (AAEAKAAEAAASA) shows a compositional bias: low complexity. At Tyr232 the chain carries Phosphotyrosine. Pro residues predominate over residues 246–255 (SQPPPPPYYP). The PPxY motif 2 motif lies at 249-253 (PPPPY).

As to quaternary structure, binds to the WW domain of YAP1, WWP1 and WWP2. Interacts with NEDD4. Interacts with ESR1 and UBE3A. Phosphorylated in repsonse to EGF as well as estrogen and progesterone hormones. Tyr-192 and Tyr-232 are phosphorylated by YES and SRC inducing nuclear translocation.

The protein localises to the cytoplasm. It localises to the nucleus. Acts as a transcriptional coactivator of estrogen and progesterone receptors (ESR1 and PGR) upon hormone activation. In presence of estrogen, binds to ESR1-responsive promoters. Synergizes with YAP1 to enhance PGR activity. Modulates expression of post-synaptic scaffolding proteins via regulation of ESR1, ESR2 and PGR. This chain is WW domain-binding protein 2 (Wbp2), found in Rattus norvegicus (Rat).